We begin with the raw amino-acid sequence, 311 residues long: MKVAVIGAAGGIGQALALLLKNRLPAGSDLALYDIAPVTPGVAADLSHIPTPVSIKGYCGEDPTPALEGADVVLISAGVARKPGMDRSDLFNINAGIVKSLTEKIAVTCPKACIGIITNPVNTTVAIAAEVLKKAGVYDKNKLFGVTTLDVIRSETFVAELKDKDPGEIRVPVIGGHSGVTILPLLSQVQGVEFTAEEVAALTPRIQNAGTEVVEAKAGGGSATLSMGQAACRFGLSLVKALSGEEGVVECAYVEGNGEHARFFAQPILLGKNGVEEIQSYGELSAFEQEALESMLDTLRGDIKIGEEFVQ.

Residues 7–13 and aspartate 34 each bind NAD(+); that span reads GAAGGIG. Residues arginine 81 and arginine 87 each coordinate substrate. NAD(+) is bound by residues asparagine 94 and 117–119; that span reads ITN. Substrate is bound by residues asparagine 119 and arginine 153. The active-site Proton acceptor is histidine 177. Methionine 227 lines the NAD(+) pocket.

It belongs to the LDH/MDH superfamily. MDH type 1 family. In terms of assembly, homodimer.

The catalysed reaction is (S)-malate + NAD(+) = oxaloacetate + NADH + H(+). Its function is as follows. Catalyzes the reversible oxidation of malate to oxaloacetate. This is Malate dehydrogenase from Aliivibrio fischeri (strain ATCC 700601 / ES114) (Vibrio fischeri).